A 761-amino-acid chain; its full sequence is Mitochondrial inner membrane m-AAA protease component YTA10 (761 aa).

Residues 1–115 (MMMWQRYARG…SLSEYFRSKE (115 aa)) are Mitochondrial matrix-facing. A disordered region spans residues 67-101 (SWTRLNENRPNKEGEGKNNGNKDNNSNKEDGKDKR). Composition is skewed to basic and acidic residues over residues 72-82 (NENRPNKEGEG) and 91-101 (NSNKEDGKDKR). Residues 116–136 (FANTMFLTIGFTIIFTLLTPS) traverse the membrane as a helical segment. Topologically, residues 137–223 (SNNSGDDSNR…IPIKYIERSS (87 aa)) are mitochondrial intermembrane. A helical transmembrane segment spans residues 224–244 (PFTFLFPFLPTIILLGGLYFI). Over 245-761 (TRKINSSPPN…EPPEAPAATN (517 aa)) the chain is Mitochondrial matrix. ATP contacts are provided by Val-290, Ala-291, Thr-332, Gly-333, Lys-334, Thr-335, Leu-336, and His-472. Residue His-558 participates in Zn(2+) binding. Glu-559 is a catalytic residue. The Zn(2+) site is built by His-562 and Asp-634.

It in the N-terminal section; belongs to the AAA ATPase family. In the C-terminal section; belongs to the peptidase M41 family. As to quaternary structure, component of the 850 kDa m-AAA protease complex, a heterohexamer composed of YTA12/RCA1 and YTA10/AFG3. Associates with the prohibitin complex, composed of PHB1 and PHB2, inhibiting the activity of the m-AAA protease complex. The cofactor is Zn(2+).

The protein localises to the mitochondrion inner membrane. It catalyses the reaction ATP + H2O = ADP + phosphate + H(+). ATP hydrolysis is coordinated within m-AAA protease ring complexes: ATP-binding to YTA10/AFG3 inhibits ATP hydrolysis by the neighboring subunit YTA12/RCA1, leading to coordinated ATP hydrolysis within the AAA ATPase ring. Its function is as follows. Catalytic component of the m-AAA protease, a protease that plays a key role in proteostasis of inner mitochondrial membrane proteins. YTA10/AFG3 possesses both ATPase and protease activities: the ATPase activity is required to unfold substrates, threading them into the internal proteolytic cavity for hydrolysis into small peptide fragments. The complex is necessary for the assembly of mitochondrial respiratory chain and ATPase complexes. The m-AAA protease carries out protein quality control in the inner membrane of the mitochondria by mediating degradation of mistranslated or misfolded polypeptides. It also mediates protein maturation of the mitochondrial ribosomal subunit MRPL32/bL32m by catalyzing the cleavage of the presequence of MRPL32/bL32m prior to assembly into the mitochondrial ribosome. Promotes maturation of cytochrome c peroxidase (CCP1) by acting as a membrane protein dislocase via its ATPase activity: pulls the CCP1 transmembrane to the matrix prior to processing by the rhomboid protease PCP1. The membrane protein dislocase activity is also required to dislocate moderately hydrophobic transmembrane segments from the membrane. In Saccharomyces cerevisiae (strain ATCC 204508 / S288c) (Baker's yeast), this protein is Mitochondrial inner membrane m-AAA protease component YTA10.